Consider the following 251-residue polypeptide: L-ascorbate peroxidase 2, cytosolic (251 aa).

The active-site Proton acceptor is histidine 43. Histidine 163 is a heme b binding site. Threonine 164, threonine 180, asparagine 182, isoleucine 185, and aspartate 187 together coordinate K(+).

The protein belongs to the peroxidase family. Ascorbate peroxidase subfamily. Heme b serves as cofactor. As to expression, detected in bundle sheath cells, the photosynthetic cells that surround the phloem and xylem.

Its subcellular location is the cytoplasm. The catalysed reaction is L-ascorbate + H2O2 = L-dehydroascorbate + 2 H2O. Its function is as follows. Plays a key role in hydrogen peroxide removal. This is L-ascorbate peroxidase 2, cytosolic from Arabidopsis thaliana (Mouse-ear cress).